Consider the following 453-residue polypeptide: Flap endonuclease 1 (453 aa).

The tract at residues Met1–Arg105 is N-domain. Asp34 contacts Mg(2+). Arg47 and Arg71 together coordinate DNA. Positions 87, 159, 161, 180, and 182 each coordinate Mg(2+). Positions Asp123 to His254 are I-domain. A DNA-binding site is contributed by Glu159. Residues Gly232 and Asp234 each contribute to the DNA site. Residue Asp234 participates in Mg(2+) binding. 2 disordered regions span residues Glu273–Ser336 and Arg409–Asn453. Residues Lys320–Val333 show a composition bias toward basic residues. An interaction with PCNA region spans residues Gln406–Phe414. The segment covering Lys417–Ser446 has biased composition (basic and acidic residues).

This sequence belongs to the XPG/RAD2 endonuclease family. FEN1 subfamily. Interacts with PCNA. Three molecules of FEN1 bind to one PCNA trimer with each molecule binding to one PCNA monomer. PCNA stimulates the nuclease activity without altering cleavage specificity. It depends on Mg(2+) as a cofactor. Phosphorylated. Phosphorylation upon DNA damage induces relocalization to the nuclear plasma.

It is found in the nucleus. The protein resides in the nucleolus. Its subcellular location is the nucleoplasm. The protein localises to the mitochondrion. Structure-specific nuclease with 5'-flap endonuclease and 5'-3' exonuclease activities involved in DNA replication and repair. During DNA replication, cleaves the 5'-overhanging flap structure that is generated by displacement synthesis when DNA polymerase encounters the 5'-end of a downstream Okazaki fragment. It enters the flap from the 5'-end and then tracks to cleave the flap base, leaving a nick for ligation. Also involved in the long patch base excision repair (LP-BER) pathway, by cleaving within the apurinic/apyrimidinic (AP) site-terminated flap. Acts as a genome stabilization factor that prevents flaps from equilibrating into structures that lead to duplications and deletions. Also possesses 5'-3' exonuclease activity on nicked or gapped double-stranded DNA, and exhibits RNase H activity. Also involved in replication and repair of rDNA and in repairing mitochondrial DNA. The sequence is that of Flap endonuclease 1 from Cryptococcus neoformans var. neoformans serotype D (strain B-3501A) (Filobasidiella neoformans).